The chain runs to 234 residues: Nuclear transcription factor Y subunit B-6 (234 aa).

Disordered stretches follow at residues 1–21 (MERG…TPSP) and 35–55 (MRPP…EECT). A DNA-binding region spans residues 63 to 69 (MPIANVI). The interval 90 to 101 (IQECVSEYISFI) is subunit association domain (SAD). Residues 206 to 234 (NEPNSKMSGSSSGASGARVEVFPTQQHKY) are disordered. The segment covering 213 to 222 (SGSSSGASGA) has biased composition (low complexity).

The protein belongs to the NFYB/HAP3 subunit family. Heterotrimeric transcription factor composed of three components, NF-YA, NF-YB and NF-YC. NF-YB and NF-YC must interact and dimerize for NF-YA association and DNA binding. Interacts with PRN1. Binds directly with DPB3-1. In terms of tissue distribution, expressed in roots, flowers and developing siliques. Present in etiolated seedlings.

The protein localises to the nucleus. Its function is as follows. Component of the NF-Y/HAP transcription factor complex. The NF-Y complex stimulates the transcription of various genes by recognizing and binding to a CCAAT motif in promoters. Plays a role in the regulation of the embryogenesis. Involved in the abscisic acid (ABA) signaling pathway. This chain is Nuclear transcription factor Y subunit B-6, found in Arabidopsis thaliana (Mouse-ear cress).